The sequence spans 80 residues: Acyl carrier protein (80 aa).

Positions 4 to 79 constitute a Carrier domain; the sequence is EEIFNKIKDL…DAVSYIKSHQ (76 aa). At Ser-39 the chain carries O-(pantetheine 4'-phosphoryl)serine.

This sequence belongs to the acyl carrier protein (ACP) family. Post-translationally, 4'-phosphopantetheine is transferred from CoA to a specific serine of apo-ACP by AcpS. This modification is essential for activity because fatty acids are bound in thioester linkage to the sulfhydryl of the prosthetic group.

Its subcellular location is the cytoplasm. The protein operates within lipid metabolism; fatty acid biosynthesis. Functionally, carrier of the growing fatty acid chain in fatty acid biosynthesis. The sequence is that of Acyl carrier protein from Lactobacillus acidophilus (strain ATCC 700396 / NCK56 / N2 / NCFM).